Consider the following 322-residue polypeptide: Mas-related G-protein coupled receptor member X1 (322 aa).

Over 1–30 (MDPTISSHDTESTPLNETGHPNCTPILTLS) the chain is Extracellular. N-linked (GlcNAc...) asparagine glycosylation occurs at asparagine 16. The chain crosses the membrane as a helical span at residues 31 to 51 (FLVLITTLVGLAGNTIVLWLL). Topologically, residues 52–59 (GFRMRRKA) are cytoplasmic. The helical transmembrane segment at 60–80 (ISVYILNLALADSFFLCCHFI) threads the bilayer. The Extracellular portion of the chain corresponds to 81–100 (DSLLRIIDFYGLYAHKLSKD). Residues 101 to 121 (ILGNAAIIPYISGLSILSAIS) traverse the membrane as a helical segment. Topologically, residues 122–142 (TERCLCVLWPIWYHCHRPRNM) are cytoplasmic. Residues 143-163 (SAIICALIWVLSFLMGILDWF) form a helical membrane-spanning segment. Residues 164 to 179 (SGFLGETHHHLWKNVD) lie on the Extracellular side of the membrane. A helical membrane pass occupies residues 180–200 (FIITAFLIFLFMLLSGSSLAL). Over 201–223 (LLRILCGPRRKPLSRLYVTIALT) the chain is Cytoplasmic. Residues 224–244 (VMVYLICGLPLGLYLFLLYWF) form a helical membrane-spanning segment. The Extracellular portion of the chain corresponds to 245–257 (GVHLHYPFCHIYQ). A helical membrane pass occupies residues 258–278 (VTAVLSCVNSSANPIIYFLVG). At 279–322 (SFRQHRKHRSLKRVLKRALEDTPEEDEYTDSHLHKTTEISESRY) the chain is on the cytoplasmic side.

This sequence belongs to the G-protein coupled receptor 1 family. Mas subfamily. Expressed in a subset of IB4-positive small diameter nociceptive dorsal root neurons.

It localises to the cell membrane. In terms of biological role, orphan receptor activated by neuropeptides terminating in Arg-Phe or Arg-Phe-amide. Mediates its action by association with G proteins that activate a phosphatidylinositol-calcium second messenger system. Its effect is mediated by G(q) and G(11) proteins. May regulate the function of nociceptive neurons by modulation of pain perception. The polypeptide is Mas-related G-protein coupled receptor member X1 (Mus musculus (Mouse)).